A 411-amino-acid polypeptide reads, in one-letter code: Kelch domain-containing protein 10 (411 aa).

6 Kelch repeats span residues 72–133 (NLYV…LHGH), 135–186 (LLVF…IIHG), 187–239 (FLYV…HDGQ), 240–288 (RIYV…RRCH), 296–342 (EVFI…AVTP), and 345–388 (CMYI…YFPQ).

It belongs to the KLHDC10 family. In terms of assembly, component of a CRL2 E3 ubiquitin-protein ligase complex, also named ECS (Elongin BC-CUL2/5-SOCS-box protein) complex, composed of CUL2, Elongin BC (ELOB and ELOC), RBX1 and substrate-specific adapter KLHDC10.

Its pathway is protein modification; protein ubiquitination. Substrate-recognition component of a Cul2-RING (CRL2) E3 ubiquitin-protein ligase complex of the DesCEND (destruction via C-end degrons) pathway, which recognizes a C-degron located at the extreme C terminus of target proteins, leading to their ubiquitination and degradation. The C-degron recognized by the DesCEND pathway is usually a motif of less than ten residues and can be present in full-length proteins, truncated proteins or proteolytically cleaved forms. The CRL2(KLHDC10) complex specifically recognizes proteins with a proline-glycine (Pro-Gly) or an alanine tail (CAT tail) at the C-terminus, leading to their ubiquitination and degradation. The CRL2(KLHDC10) complex is involved in the ribosome-associated quality control (RQC) pathway, which mediates the extraction of incompletely synthesized nascent chains from stalled ribosomes: CRL2(KLHDC10) acts downstream of NEMF and recognizes CAT tails associated with stalled nascent chains, leading to their ubiquitination and degradation. The polypeptide is Kelch domain-containing protein 10 (Xenopus laevis (African clawed frog)).